The following is a 204-amino-acid chain: Guanylate kinase (204 aa).

In terms of domain architecture, Guanylate kinase-like spans 3 to 181; that stretch reads GTLYIVSAAS…AVSEMSAIFT (179 aa). Residue 10–17 coordinates ATP; that stretch reads AASGTGKS.

It belongs to the guanylate kinase family.

The protein localises to the cytoplasm. The catalysed reaction is GMP + ATP = GDP + ADP. Its function is as follows. Essential for recycling GMP and indirectly, cGMP. The sequence is that of Guanylate kinase (gmk) from Xylella fastidiosa (strain 9a5c).